The chain runs to 366 residues: Alanine racemase (366 aa).

Catalysis depends on lysine 33, which acts as the Proton acceptor; specific for D-alanine. The residue at position 33 (lysine 33) is an N6-(pyridoxal phosphate)lysine. Substrate is bound at residue arginine 129. Tyrosine 253 serves as the catalytic Proton acceptor; specific for L-alanine. A substrate-binding site is contributed by methionine 301.

Belongs to the alanine racemase family. It depends on pyridoxal 5'-phosphate as a cofactor.

The catalysed reaction is L-alanine = D-alanine. It functions in the pathway amino-acid biosynthesis; D-alanine biosynthesis; D-alanine from L-alanine: step 1/1. In terms of biological role, catalyzes the interconversion of L-alanine and D-alanine. May also act on other amino acids. The protein is Alanine racemase (alr) of Xanthomonas oryzae pv. oryzae (strain KACC10331 / KXO85).